Reading from the N-terminus, the 316-residue chain is uncharacterized protein (316 aa).

Residues 285-316 (APEGDLGDIIEVDPSEPRSDPYRRLRTPPPGG) form a disordered region. Residues 289-298 (DLGDIIEVDP) are compositionally biased toward acidic residues.

Functionally, possibly necessary for replication. This is an uncharacterized protein from Halobacterium salinarum (Halobacterium halobium).